The following is a 249-amino-acid chain: MFGLKAKSTKKVLGSIPKHIGIIMDGNGRWAKKRLKPRVFGHKAGMDALQEVTITASELGVKVLTVYAFSTENWSRPQDEVSFIMNLPVTFFDKYVPVLHENNVKIQMIGETSRLPEDTLAALNAAIDKTKRNTGLILNFALNYGGRAEITSAVRFIAQDVLDAKLNPGDITEDLIANYLMTDHLPYLYRDPDLIIRTSGELRLSNFLPWQSAYSEFYFTPVLWPDFKKAELLKAIADYNRRQRRFGKV.

Asp25 is an active-site residue. Asp25 serves as a coordination point for Mg(2+). Substrate is bound by residues 26-29 (GNGR), Trp30, Arg38, His42, and 70-72 (STE). Asn73 acts as the Proton acceptor in catalysis. Residues Trp74, Arg76, Arg197, and 203-205 (RLS) contribute to the substrate site. Glu216 serves as a coordination point for Mg(2+).

The protein belongs to the UPP synthase family. As to quaternary structure, homodimer. The cofactor is Mg(2+).

Its function is as follows. Catalyzes the condensation of isopentenyl diphosphate (IPP) with allylic pyrophosphates generating different type of terpenoids. The chain is Isoprenyl transferase from Streptococcus pyogenes serotype M1.